The following is a 358-amino-acid chain: Endo-1,4-beta-xylanase B (358 aa).

The signal sequence occupies residues 1–17; sequence MRFSASLLLALTGSAAA. A GH10 domain is found at 40 to 352; that stretch reads QGLDAAMKAA…KAAYNAFLRG (313 aa). Asn136 is a glycosylation site (N-linked (GlcNAc...) asparagine). The active-site Proton donor is the Glu166. Glu274 functions as the Nucleophile in the catalytic mechanism.

This sequence belongs to the glycosyl hydrolase 10 (cellulase F) family.

It localises to the secreted. The catalysed reaction is Endohydrolysis of (1-&gt;4)-beta-D-xylosidic linkages in xylans.. Its pathway is glycan degradation; xylan degradation. Its activity is regulated as follows. Partial inhibition of activity is detected in the presence of Ag(+), Cu2(+) and SDS. Like most fungal xylanases, activity is completely inhibited by Hg(2+) since Hg(2+) could interact with tryptophan residues and oxidize the indole ring. Beta-mercaptoethanol enhances the enzymatic activity by counteracting the oxidation effects of the S-S linkage between cysteine residues. In terms of biological role, endo-1,4-beta-xylanase involved in the hydrolysis of xylan, a major structural heterogeneous polysaccharide found in plant biomass representing the second most abundant polysaccharide in the biosphere, after cellulose. Is more active on soluble wheat arabinoxylan (defined as 100%) than on birchwood xylan (75.4%) and beechwood xylan (70.8%), and less active on insoluble wheat arabinoxylan (17.4%). Xylose is the major hydrolysis product of XynB. The polypeptide is Endo-1,4-beta-xylanase B (Humicola insolens (Soft-rot fungus)).